Reading from the N-terminus, the 298-residue chain is N-acetylmuramic acid 6-phosphate etherase (298 aa).

The SIS domain maps to 55–218 (IHAQVSGGGR…STGLMIKSGK (164 aa)). The active-site Proton donor is the Glu-83. The active site involves Glu-114.

This sequence belongs to the GCKR-like family. MurNAc-6-P etherase subfamily. Homodimer.

It carries out the reaction N-acetyl-D-muramate 6-phosphate + H2O = N-acetyl-D-glucosamine 6-phosphate + (R)-lactate. Its pathway is amino-sugar metabolism; 1,6-anhydro-N-acetylmuramate degradation. The protein operates within amino-sugar metabolism; N-acetylmuramate degradation. It participates in cell wall biogenesis; peptidoglycan recycling. Specifically catalyzes the cleavage of the D-lactyl ether substituent of MurNAc 6-phosphate, producing GlcNAc 6-phosphate and D-lactate. Together with AnmK, is also required for the utilization of anhydro-N-acetylmuramic acid (anhMurNAc) either imported from the medium or derived from its own cell wall murein, and thus plays a role in cell wall recycling. This chain is N-acetylmuramic acid 6-phosphate etherase, found in Shigella flexneri.